Reading from the N-terminus, the 79-residue chain is uncharacterized protein (79 aa).

This is an uncharacterized protein from Caenorhabditis elegans.